Consider the following 436-residue polypeptide: Ribulose bisphosphate carboxylase large chain (436 aa).

Residues asparagine 104 and threonine 154 each contribute to the substrate site. Lysine 156 (proton acceptor) is an active-site residue. Lysine 158 serves as a coordination point for substrate. Mg(2+) contacts are provided by lysine 182, aspartate 184, and glutamate 185. An N6-carboxylysine modification is found at lysine 182. The active-site Proton acceptor is the histidine 275. Positions 276, 308, and 360 each coordinate substrate.

The protein belongs to the RuBisCO large chain family. Type I subfamily. As to quaternary structure, heterohexadecamer of 8 large chains and 8 small chains. Requires Mg(2+) as cofactor.

It is found in the plastid. The protein localises to the chloroplast. The enzyme catalyses 2 (2R)-3-phosphoglycerate + 2 H(+) = D-ribulose 1,5-bisphosphate + CO2 + H2O. It catalyses the reaction D-ribulose 1,5-bisphosphate + O2 = 2-phosphoglycolate + (2R)-3-phosphoglycerate + 2 H(+). Functionally, ruBisCO catalyzes two reactions: the carboxylation of D-ribulose 1,5-bisphosphate, the primary event in carbon dioxide fixation, as well as the oxidative fragmentation of the pentose substrate in the photorespiration process. Both reactions occur simultaneously and in competition at the same active site. In Euglena viridis (Cercaria viridis), this protein is Ribulose bisphosphate carboxylase large chain.